Here is a 439-residue protein sequence, read N- to C-terminus: Microfibrillar-associated protein 1A (439 aa).

Residues 1-200 (MSVPSALMKQ…SEDEMEPRLK (200 aa)) form a disordered region. Position 2 is an N-acetylserine (S2). Residues 23-34 (RNEKGEISMEKV) are compositionally biased toward basic and acidic residues. Residues S52 and S53 each carry the phosphoserine modification. Basic and acidic residues predominate over residues 61 to 70 (QFIKKAKEQE). A Glycyl lysine isopeptide (Lys-Gly) (interchain with G-Cter in SUMO2) cross-link involves residue K67. Over residues 71-81 (AEPEEQEEDSS) the composition is skewed to acidic residues. A phosphoserine mark is found at S94, S116, S118, S132, and S133. Acidic residues-rich tracts occupy residues 112 to 122 (VVGESDSEVEG) and 131 to 144 (DSSE…DDEE). The span at 145-163 (IERRRGMMRQRAQERKNEE) shows a compositional bias: basic and acidic residues. Over residues 178-195 (ESESESEYEEYTDSEDEM) the composition is skewed to acidic residues. K249 is covalently cross-linked (Glycyl lysine isopeptide (Lys-Gly) (interchain with G-Cter in SUMO2)). T267 bears the Phosphothreonine mark. Residue K357 forms a Glycyl lysine isopeptide (Lys-Gly) (interchain with G-Cter in SUMO2) linkage. Residue S361 is modified to Phosphoserine. Glycyl lysine isopeptide (Lys-Gly) (interchain with G-Cter in SUMO2) cross-links involve residues K371, K381, K415, and K418. Residue S432 is modified to Phosphoserine.

The protein belongs to the MFAP1 family. As to quaternary structure, component of the spliceosome B complex. Interacts with PRPF38A (via N-terminal interaction domain).

It localises to the nucleus. Functionally, involved in pre-mRNA splicing as a component of the spliceosome. The polypeptide is Microfibrillar-associated protein 1A (Mus musculus (Mouse)).